Reading from the N-terminus, the 176-residue chain is Protein MAL2 (176 aa).

Over 1–34 (MSAGGASVPPPPNPAVSFPVPRVTLPAGPDILRT) the chain is Cytoplasmic. An MARVEL domain is found at 31 to 175 (ILRTYSGAFV…SLGLALRRWR (145 aa)). A helical transmembrane segment spans residues 35–55 (YSGAFVCLEILFGGLVWILVA). At 56–66 (SSNVPLPLLQG) the chain is on the lumenal side. Residues 67-87 (WVMFVSVTAFFFSLLFLGLFL) traverse the membrane as a helical segment. The Cytoplasmic portion of the chain corresponds to 88-102 (SGMVTQIDANWNFLD). Residues 103 to 123 (FAYHFTVFVFYFGAFLLEAAA) form a helical membrane-spanning segment. At 124 to 149 (TSLHDLHYNITMTGQPLLNDNQYNIN) the chain is on the lumenal side. N-linked (GlcNAc...) asparagine glycosylation occurs at N132. A helical transmembrane segment spans residues 150–170 (VAASIFAFMTTACYGCSLGLA). Topologically, residues 171–176 (LRRWRP) are cytoplasmic.

This sequence belongs to the MAL family. In terms of assembly, interacts with TPD52L2.

Its subcellular location is the cell membrane. It localises to the apical cell membrane. Functionally, member of the machinery of polarized transport. Required for the indirect transcytotic route at the step of the egress of the transcytosing cargo from perinuclear endosomes in order for it to travel to the apical surface via a raft-dependent pathway. This Pongo abelii (Sumatran orangutan) protein is Protein MAL2 (MAL2).